Here is a 250-residue protein sequence, read N- to C-terminus: MSKENKTTDFGFTEVPWEEKQKKVAGVFHSVAAKYDLMNDLMSFGIHRIWKKQTIAKTGVRKGDKVLDLAGGTGDLAYKFCQMVGSQGKVVLSDINSSMLEVGKEKLTNKGCVGNIEYVQANAECLPFPDNYFDCITISFGLRNVTDKAKALASMCRVLKPGGRLLVLEFSKPIVPMLSKVYDEYSFKALPFLGKIITQDAESYKYLAESIRKHPDQETLKQMMYDAGFDNVEYQNMTGGIVALHIGYKY.

S-adenosyl-L-methionine-binding positions include Thr-73, Asp-94, 122–123, and Ser-139; that span reads NA.

This sequence belongs to the class I-like SAM-binding methyltransferase superfamily. MenG/UbiE family.

The catalysed reaction is a 2-demethylmenaquinol + S-adenosyl-L-methionine = a menaquinol + S-adenosyl-L-homocysteine + H(+). It carries out the reaction a 2-methoxy-6-(all-trans-polyprenyl)benzene-1,4-diol + S-adenosyl-L-methionine = a 5-methoxy-2-methyl-3-(all-trans-polyprenyl)benzene-1,4-diol + S-adenosyl-L-homocysteine + H(+). Its pathway is quinol/quinone metabolism; menaquinone biosynthesis; menaquinol from 1,4-dihydroxy-2-naphthoate: step 2/2. The protein operates within cofactor biosynthesis; ubiquinone biosynthesis. In terms of biological role, methyltransferase required for the conversion of demethylmenaquinol (DMKH2) to menaquinol (MKH2) and the conversion of 2-polyprenyl-6-methoxy-1,4-benzoquinol (DDMQH2) to 2-polyprenyl-3-methyl-6-methoxy-1,4-benzoquinol (DMQH2). This is Ubiquinone/menaquinone biosynthesis C-methyltransferase UbiE from Francisella philomiragia subsp. philomiragia (strain ATCC 25017 / CCUG 19701 / FSC 153 / O#319-036).